A 382-amino-acid polypeptide reads, in one-letter code: Membrane protein MLC1 (382 aa).

The span at 1 to 28 (MTREGQFREELGYDRMPTLERGRQDAGR) shows a compositional bias: basic and acidic residues. The tract at residues 1 to 43 (MTREGQFREELGYDRMPTLERGRQDAGRQDPGSYTPDSKPKDL) is disordered. The next 4 membrane-spanning stretches (helical) occupy residues 58-78 (WVFSVLMGSCLLVTSGFSLYL), 88-107 (YLRCAAGSCIPSAIVSFAVG), 117-137 (FQILFVSTFAVTTTCLIWFGC), and 148-168 (INFNLILLLLLELLMAATVII). 3 positions are modified to phosphoserine: Ser-183, Ser-185, and Ser-188. 4 helical membrane-spanning segments follow: residues 205–225 (SVVEVIAGVSAVLGGVIALNV), 234–254 (LSVTFFWILVACFPSAIASHV), 263–283 (LVEVLIAISSLTSPLLFTASG), and 309–329 (LLLLLLLLLLLQGGLNTGTAI).

In terms of assembly, interacts with ATP1B1. Part of a complex containing ATP1B1, TRPV4, AQP4 and HEPACAM.

The protein resides in the membrane. Its subcellular location is the cell membrane. The protein localises to the cytoplasm. It localises to the perinuclear region. It is found in the endoplasmic reticulum. Functionally, transmembrane protein mainly expressed in brain astrocytes that may play a role in transport across the blood-brain and brain-cerebrospinal fluid barriers. Regulates the response of astrocytes to hypo-osmosis by promoting calcium influx. May function as regulatory protein of membrane protein complexes such as ion channels. This is Membrane protein MLC1 from Mus musculus (Mouse).